Reading from the N-terminus, the 401-residue chain is Palmitoyltransferase PFA3 (401 aa).

Residues 1–20 lie on the Cytoplasmic side of the membrane; sequence MQCRKCCFACEKWCFIGAKA. Residues 21–41 form a helical membrane-spanning segment; that stretch reads FLPLVVNFLIIWACWVHAWLV. Residues 42–56 lie on the Lumenal side of the membrane; the sequence is CWEPQLFESDTTFWR. The chain crosses the membrane as a helical span at residues 57 to 77; the sequence is VYGVAGVAIGIMCNVLYLKVC. Residues 78–171 are Cytoplasmic-facing; it reads KVGPGSPTDI…TAIGFHNHKY (94 aa). The 51-residue stretch at 127–177 folds into the DHHC domain; that stretch reads RFCTKCIGWKPDRSHHCSNYKRCVLKFDHYCPWFATAIGFHNHKYFVLFLW. The active-site S-palmitoyl cysteine intermediate is cysteine 157. A helical transmembrane segment spans residues 172 to 192; sequence FVLFLWYVTILCFFCLGSTGF. Residues 193-220 lie on the Lumenal side of the membrane; the sequence is VFYNHILEIGAMRGPDGNTDYVGAISVN. Residues 221 to 241 traverse the membrane as a helical segment; that stretch reads VMILMVLALVFAIAVGTFATF. The Cytoplasmic portion of the chain corresponds to 242 to 401; the sequence is SLYLVFNNQS…INMVNKNNTK (160 aa). Positions 351–367 are enriched in low complexity; the sequence is QQRQQQQKRTQYDLPQH. The segment at 351–401 is disordered; the sequence is QQRQQQQKRTQYDLPQHLQPPPQEHYEYDDEAQDSGDDIPLINMVNKNNTK. Over residues 377 to 387 the composition is skewed to acidic residues; it reads EYDDEAQDSGD.

It belongs to the DHHC palmitoyltransferase family. PFA3 subfamily.

It localises to the vacuole membrane. It catalyses the reaction L-cysteinyl-[protein] + hexadecanoyl-CoA = S-hexadecanoyl-L-cysteinyl-[protein] + CoA. In terms of biological role, palmitoyltransferase specific for VAC8. Palmitoylates VAC8 at one or more of its N-terminal cysteine residues, which is required for its proper membrane localization. The chain is Palmitoyltransferase PFA3 (PFA3) from Yarrowia lipolytica (strain CLIB 122 / E 150) (Yeast).